The primary structure comprises 302 residues: Ribosomal protein L11 methyltransferase (302 aa).

Positions 148, 169, 191, and 237 each coordinate S-adenosyl-L-methionine.

The protein belongs to the methyltransferase superfamily. PrmA family.

It localises to the cytoplasm. The enzyme catalyses L-lysyl-[protein] + 3 S-adenosyl-L-methionine = N(6),N(6),N(6)-trimethyl-L-lysyl-[protein] + 3 S-adenosyl-L-homocysteine + 3 H(+). Its function is as follows. Methylates ribosomal protein L11. This chain is Ribosomal protein L11 methyltransferase, found in Desulfosudis oleivorans (strain DSM 6200 / JCM 39069 / Hxd3) (Desulfococcus oleovorans).